The chain runs to 466 residues: Chromosomal replication initiator protein DnaA (466 aa).

The segment at 1 to 86 (MSLSLWQQCL…EVGTKPVTQT (86 aa)) is domain I, interacts with DnaA modulators. The interval 86 to 129 (TLKTPVHNVVAPAQTTTAQPQRVAPAARSGWDNVPAPAEPTYRS) is domain II. The segment at 130 to 346 (NVNVKHTFDN…GALNRVIANA (217 aa)) is domain III, AAA+ region. ATP-binding residues include Gly174, Gly176, Lys177, and Thr178. Positions 347-466 (NFTGRAITID…FSNLIRTLSS (120 aa)) are domain IV, binds dsDNA.

This sequence belongs to the DnaA family. Oligomerizes as a right-handed, spiral filament on DNA at oriC.

Its subcellular location is the cytoplasm. Plays an essential role in the initiation and regulation of chromosomal replication. ATP-DnaA binds to the origin of replication (oriC) to initiate formation of the DNA replication initiation complex once per cell cycle. Binds the DnaA box (a 9 base pair repeat at the origin) and separates the double-stranded (ds)DNA. Forms a right-handed helical filament on oriC DNA; dsDNA binds to the exterior of the filament while single-stranded (ss)DNA is stabiized in the filament's interior. The ATP-DnaA-oriC complex binds and stabilizes one strand of the AT-rich DNA unwinding element (DUE), permitting loading of DNA polymerase. After initiation quickly degrades to an ADP-DnaA complex that is not apt for DNA replication. Binds acidic phospholipids. The chain is Chromosomal replication initiator protein DnaA from Salmonella agona (strain SL483).